The primary structure comprises 474 residues: Pyruvate kinase (474 aa).

Residue Arg-37 coordinates substrate. Positions 39, 41, and 71 each coordinate K(+). 39 to 42 lines the ATP pocket; that stretch reads NFSH. ATP contacts are provided by Arg-78 and Lys-160. Glu-222 contacts Mg(2+). Substrate contacts are provided by Gly-245, Asp-246, and Thr-278. Residue Asp-246 coordinates Mg(2+).

This sequence belongs to the pyruvate kinase family. As to quaternary structure, homotetramer. Mg(2+) is required as a cofactor. It depends on K(+) as a cofactor.

The catalysed reaction is pyruvate + ATP = phosphoenolpyruvate + ADP + H(+). It functions in the pathway carbohydrate degradation; glycolysis; pyruvate from D-glyceraldehyde 3-phosphate: step 5/5. This Agrobacterium vitis (Rhizobium vitis) protein is Pyruvate kinase (ttuE).